Here is a 353-residue protein sequence, read N- to C-terminus: Glycerol-3-phosphate dehydrogenase [NAD(P)+] (353 aa).

Positions 11, 40, and 115 each coordinate NADPH. Sn-glycerol 3-phosphate-binding residues include Lys115, Gly156, and Ser158. Ala160 lines the NADPH pocket. Residues Lys211, Asp264, Ser274, Arg275, and Asn276 each coordinate sn-glycerol 3-phosphate. The active-site Proton acceptor is Lys211. An NADPH-binding site is contributed by Arg275. NADPH-binding residues include Val299 and Glu301.

It belongs to the NAD-dependent glycerol-3-phosphate dehydrogenase family.

It is found in the cytoplasm. The catalysed reaction is sn-glycerol 3-phosphate + NAD(+) = dihydroxyacetone phosphate + NADH + H(+). The enzyme catalyses sn-glycerol 3-phosphate + NADP(+) = dihydroxyacetone phosphate + NADPH + H(+). It functions in the pathway membrane lipid metabolism; glycerophospholipid metabolism. In terms of biological role, catalyzes the reduction of the glycolytic intermediate dihydroxyacetone phosphate (DHAP) to sn-glycerol 3-phosphate (G3P), the key precursor for phospholipid synthesis. This Polaromonas sp. (strain JS666 / ATCC BAA-500) protein is Glycerol-3-phosphate dehydrogenase [NAD(P)+].